A 495-amino-acid chain; its full sequence is uncharacterized protein (495 aa).

A TRAM domain is found at 16–74; that stretch reads SSKRGDLIELAVTALDEDGNGIGTHDGTNVHVIGALPDERVRARLTHVGKRHLHAEAVE. [4Fe-4S] cluster-binding residues include cysteine 88, cysteine 94, cysteine 97, and cysteine 175. S-adenosyl-L-methionine-binding residues include glutamine 299, tyrosine 328, glutamate 349, and asparagine 397. Cysteine 424 (nucleophile) is an active-site residue. Residues 472-483 show a composition bias toward basic and acidic residues; it reads DRLESPAKERSR. A disordered region spans residues 472 to 495; sequence DRLESPAKERSRPRASHKAKGGAV. Residues 484 to 495 are compositionally biased toward basic residues; that stretch reads PRASHKAKGGAV.

The protein belongs to the class I-like SAM-binding methyltransferase superfamily. RNA M5U methyltransferase family.

This is an uncharacterized protein from Geobacter sulfurreducens (strain ATCC 51573 / DSM 12127 / PCA).